A 322-amino-acid chain; its full sequence is Mitochondrial thiamine pyrophosphate carrier 1 (322 aa).

Solcar repeat units follow at residues 12 to 111 (GSKT…VTLG), 122 to 208 (PAAA…LRLP), and 215 to 310 (PFGS…VLGI). The next 6 membrane-spanning stretches (helical) occupy residues 18-38 (MIAG…LDVV), 92-108 (LMYV…YRSV), 128-148 (FIAG…LDLL), 180-200 (FFQG…IFFA), 221-241 (ASAG…FDLI), and 285-302 (GLTV…VTMW).

Belongs to the mitochondrial carrier (TC 2.A.29) family.

It localises to the mitochondrion inner membrane. Mitochondrial transporter that mediates uptake of thiamine pyrophosphate (ThPP) into mitochondria. In Botryotinia fuckeliana (strain B05.10) (Noble rot fungus), this protein is Mitochondrial thiamine pyrophosphate carrier 1 (tpc1).